Consider the following 28-residue polypeptide: Potassium channel toxin alpha-KTx 13.2 (28 aa).

3 disulfide bridges follow: C2-C19, C6-C24, and C10-C26. Positions 17–24 (IKCINGSC) are interaction with Ca(2+)-activated K(+) channels.

This sequence belongs to the short scorpion toxin superfamily. Potassium channel inhibitor family. Alpha-KTx 13 subfamily. As to expression, expressed by the venom gland.

The protein resides in the secreted. Its function is as follows. Potent and selective inhibitor of Kv1.2/KCNA2 potassium channels. This chain is Potassium channel toxin alpha-KTx 13.2, found in Orthochirus scrobiculosus (Central Asian scorpion).